An 89-amino-acid chain; its full sequence is Large ribosomal subunit protein uL29 (89 aa).

The protein belongs to the universal ribosomal protein uL29 family.

The polypeptide is Large ribosomal subunit protein uL29 (Frankia alni (strain DSM 45986 / CECT 9034 / ACN14a)).